Here is a 429-residue protein sequence, read N- to C-terminus: tRNA-2-methylthio-N(6)-dimethylallyladenosine synthase (429 aa).

One can recognise an MTTase N-terminal domain in the interval 1-110 (MKFFIKTYGC…IPEAVELSIK (110 aa)). [4Fe-4S] cluster-binding residues include cysteine 10, cysteine 46, cysteine 75, cysteine 146, cysteine 150, and cysteine 153. One can recognise a Radical SAM core domain in the interval 132-364 (RNSKHHAWIT…NLQKEINKML (233 aa)). The TRAM domain maps to 366–427 (ESYLDKTVEV…AGPLYGDIIK (62 aa)).

This sequence belongs to the methylthiotransferase family. MiaB subfamily. As to quaternary structure, monomer. It depends on [4Fe-4S] cluster as a cofactor.

The protein resides in the cytoplasm. It carries out the reaction N(6)-dimethylallyladenosine(37) in tRNA + (sulfur carrier)-SH + AH2 + 2 S-adenosyl-L-methionine = 2-methylsulfanyl-N(6)-dimethylallyladenosine(37) in tRNA + (sulfur carrier)-H + 5'-deoxyadenosine + L-methionine + A + S-adenosyl-L-homocysteine + 2 H(+). In terms of biological role, catalyzes the methylthiolation of N6-(dimethylallyl)adenosine (i(6)A), leading to the formation of 2-methylthio-N6-(dimethylallyl)adenosine (ms(2)i(6)A) at position 37 in tRNAs that read codons beginning with uridine. The protein is tRNA-2-methylthio-N(6)-dimethylallyladenosine synthase of Thermosipho africanus (strain TCF52B).